The following is a 428-amino-acid chain: Adenylosuccinate synthetase 1 (428 aa).

GTP is bound by residues 12–18 (GDEGKGK) and 40–42 (GHT). Catalysis depends on aspartate 13, which acts as the Proton acceptor. 2 residues coordinate Mg(2+): aspartate 13 and glycine 40. IMP is bound by residues 13–16 (DEGK), 38–41 (NAGH), threonine 133, arginine 147, asparagine 224, threonine 239, and arginine 303. Residue histidine 41 is the Proton donor of the active site. Residue 299 to 305 (TTTGRRR) participates in substrate binding. Residues arginine 305, 331–333 (KLD), and 413–415 (GVG) contribute to the GTP site.

Belongs to the adenylosuccinate synthetase family. As to quaternary structure, homodimer. It depends on Mg(2+) as a cofactor.

The protein localises to the cytoplasm. The catalysed reaction is IMP + L-aspartate + GTP = N(6)-(1,2-dicarboxyethyl)-AMP + GDP + phosphate + 2 H(+). Its pathway is purine metabolism; AMP biosynthesis via de novo pathway; AMP from IMP: step 1/2. Plays an important role in the de novo pathway and in the salvage pathway of purine nucleotide biosynthesis. Catalyzes the first committed step in the biosynthesis of AMP from IMP. The polypeptide is Adenylosuccinate synthetase 1 (Laccaria bicolor (strain S238N-H82 / ATCC MYA-4686) (Bicoloured deceiver)).